Reading from the N-terminus, the 180-residue chain is Crossover junction endodeoxyribonuclease RuvC (180 aa).

Residues aspartate 7, glutamate 66, and aspartate 138 contribute to the active site. Aspartate 7, glutamate 66, and aspartate 138 together coordinate Mg(2+).

The protein belongs to the RuvC family. In terms of assembly, homodimer which binds Holliday junction (HJ) DNA. The HJ becomes 2-fold symmetrical on binding to RuvC with unstacked arms; it has a different conformation from HJ DNA in complex with RuvA. In the full resolvosome a probable DNA-RuvA(4)-RuvB(12)-RuvC(2) complex forms which resolves the HJ. It depends on Mg(2+) as a cofactor.

It localises to the cytoplasm. The catalysed reaction is Endonucleolytic cleavage at a junction such as a reciprocal single-stranded crossover between two homologous DNA duplexes (Holliday junction).. In terms of biological role, the RuvA-RuvB-RuvC complex processes Holliday junction (HJ) DNA during genetic recombination and DNA repair. Endonuclease that resolves HJ intermediates. Cleaves cruciform DNA by making single-stranded nicks across the HJ at symmetrical positions within the homologous arms, yielding a 5'-phosphate and a 3'-hydroxyl group; requires a central core of homology in the junction. The consensus cleavage sequence is 5'-(A/T)TT(C/G)-3'. Cleavage occurs on the 3'-side of the TT dinucleotide at the point of strand exchange. HJ branch migration catalyzed by RuvA-RuvB allows RuvC to scan DNA until it finds its consensus sequence, where it cleaves and resolves the cruciform DNA. This chain is Crossover junction endodeoxyribonuclease RuvC, found in Janthinobacterium sp. (strain Marseille) (Minibacterium massiliensis).